Here is a 501-residue protein sequence, read N- to C-terminus: Cytochrome P450 3A31 (501 aa).

Cysteine 440 is a binding site for heme.

The protein belongs to the cytochrome P450 family. It depends on heme as a cofactor. In terms of tissue distribution, expressed constitutively in liver.

It is found in the endoplasmic reticulum membrane. The protein resides in the microsome membrane. The enzyme catalyses an organic molecule + reduced [NADPH--hemoprotein reductase] + O2 = an alcohol + oxidized [NADPH--hemoprotein reductase] + H2O + H(+). Cytochromes P450 are a group of heme-thiolate monooxygenases. In liver microsomes, this enzyme is involved in an NADPH-dependent electron transport pathway. It oxidizes a variety of structurally unrelated compounds, including steroids, fatty acids, and xenobiotics. The chain is Cytochrome P450 3A31 (CYP3A31) from Mesocricetus auratus (Golden hamster).